A 203-amino-acid chain; its full sequence is ATP-dependent Clp protease proteolytic subunit 2 (203 aa).

The active-site Nucleophile is S100. H125 is a catalytic residue.

The protein belongs to the peptidase S14 family. Fourteen ClpP subunits assemble into 2 heptameric rings which stack back to back to give a disk-like structure with a central cavity, resembling the structure of eukaryotic proteasomes.

Its subcellular location is the cytoplasm. The catalysed reaction is Hydrolysis of proteins to small peptides in the presence of ATP and magnesium. alpha-casein is the usual test substrate. In the absence of ATP, only oligopeptides shorter than five residues are hydrolyzed (such as succinyl-Leu-Tyr-|-NHMec, and Leu-Tyr-Leu-|-Tyr-Trp, in which cleavage of the -Tyr-|-Leu- and -Tyr-|-Trp bonds also occurs).. Its function is as follows. Cleaves peptides in various proteins in a process that requires ATP hydrolysis. Has a chymotrypsin-like activity. Plays a major role in the degradation of misfolded proteins. The chain is ATP-dependent Clp protease proteolytic subunit 2 from Thermobifida fusca (strain YX).